We begin with the raw amino-acid sequence, 354 residues long: Guanine nucleotide-binding protein G(i) subunit alpha-1 (354 aa).

Gly2 carries N-myristoyl glycine lipidation. Cys3 carries the S-palmitoyl cysteine lipid modification. Residues 32–354 enclose the G-alpha domain; it reads REVKLLLLGA…KNNLKDCGLF (323 aa). The interval 35-48 is G1 motif; it reads KLLLLGAGESGKST. Residues 43–48, 150–151, and 175–178 contribute to the GTP site; these read ESGKST, DS, and LRTR. Ser47 is a Mg(2+) binding site. Positions 173-181 are G2 motif; that stretch reads DVLRTRVKT. Thr181 contacts Mg(2+). The segment at 196 to 205 is G3 motif; sequence FKMFDVGGQR. Residues 200 to 204, 269 to 272, and Ala326 each bind GTP; these read DVGGQ and NKKD. The G4 motif stretch occupies residues 265-272; the sequence is ILFLNKKD. Residues 324-329 are G5 motif; that stretch reads TCATDT.

The protein belongs to the G-alpha family. G(i/o/t/z) subfamily. Heterotrimeric G proteins are composed of 3 units; alpha, beta and gamma. The alpha chain contains the guanine nucleotide binding site. Part of a spindle orientation complex at least composed of GNAI1, GPSM2 and NUMA1. Identified in complex with the beta subunit GNB1 and the gamma subunit GNG1. Identified in complex with the beta subunit GNB1 and the gamma subunit GNG2. Component of the TAS2R14-GNAI1 complex, consisting of TAS2R14, GNAI1, GNB1 and GNG2; within the complex interacts with TAS2R14; this complex plays a role in the perception of bitterness. GTP binding causes dissociation of the heterotrimer, liberating the individual subunits so that they can interact with downstream effector proteins. Interacts (GDP-bound form) with GPSM1; this inhibits guanine nucleotide exchange and GTP binding. Interacts (GDP-bound form) with GPSM2 (via GoLoco domains); this inhibits guanine nucleotide exchange. Interacts with RGS10; this strongly enhances GTP hydrolysis. Interacts with RGS1 and RGS16; this strongly enhances GTPase activity. Interacts with RGS4. Interacts with RGS12. Interacts (via active GTP- or inactive GDP-bound forms) with RGS14 (via RGS and GoLoco domains). Interacts with RGS3, RGS6, RGS7, RGS8, RGS17, RGS18 and RGS20 (in vitro). Interacts (GDP-bound form) with RIC8A (via C-terminus); promoting GNAI1 folding and association with the plasma membrane. Interacts (inactive GDP-bound form) with NUCB1 (via GBA motif); the interaction leads to activation of GNAI1. Interacts (inactive GDP-bound form) with CCDC88C/DAPLE (via GBA motif); the interaction leads to activation of GNAI1. Interacts (inactive GDP-bound form) with CCDC8A/GIV (via GBA motif). Interacts with GPR15. In terms of processing, myristoylation at Gly-2 is required for membrane anchoring before palmitoylation. Palmitoylation at Cys-3 varies with membrane lipid composition.

The protein localises to the nucleus. It is found in the cytoplasm. It localises to the cell membrane. The protein resides in the cytoskeleton. Its subcellular location is the microtubule organizing center. The protein localises to the centrosome. It is found in the cell cortex. It localises to the membrane. Its function is as follows. Guanine nucleotide-binding proteins (G proteins) function as transducers downstream of G protein-coupled receptors (GPCRs) in numerous signaling cascades. The alpha chain contains the guanine nucleotide binding site and alternates between an active, GTP-bound state and an inactive, GDP-bound state. Signaling by an activated GPCR promotes GDP release and GTP binding. The alpha subunit has a low GTPase activity that converts bound GTP to GDP, thereby terminating the signal. Both GDP release and GTP hydrolysis are modulated by numerous regulatory proteins. Signaling is mediated via effector proteins, such as adenylate cyclase. Inhibits adenylate cyclase activity of ADCY1, ADCY5 and ADCY6, leading to decreased intracellular cAMP levels. The inactive GDP-bound form prevents the association of RGS14 with centrosomes and is required for the translocation of RGS14 from the cytoplasm to the plasma membrane. Required for normal cytokinesis during mitosis. Required for cortical dynein-dynactin complex recruitment during metaphase. This is Guanine nucleotide-binding protein G(i) subunit alpha-1 (GNAI1) from Pongo abelii (Sumatran orangutan).